The following is a 355-amino-acid chain: Protein RecA (355 aa).

74 to 81 contacts ATP; the sequence is GPESSGKT.

It belongs to the RecA family.

Its subcellular location is the cytoplasm. Functionally, can catalyze the hydrolysis of ATP in the presence of single-stranded DNA, the ATP-dependent uptake of single-stranded DNA by duplex DNA, and the ATP-dependent hybridization of homologous single-stranded DNAs. It interacts with LexA causing its activation and leading to its autocatalytic cleavage. The protein is Protein RecA of Cytophaga hutchinsonii (strain ATCC 33406 / DSM 1761 / CIP 103989 / NBRC 15051 / NCIMB 9469 / D465).